Reading from the N-terminus, the 192-residue chain is Peptidyl-tRNA hydrolase (192 aa).

Residue tyrosine 14 coordinates tRNA. Histidine 19 functions as the Proton acceptor in the catalytic mechanism. Residues tyrosine 64, asparagine 66, and asparagine 112 each coordinate tRNA.

Belongs to the PTH family. As to quaternary structure, monomer.

It localises to the cytoplasm. It catalyses the reaction an N-acyl-L-alpha-aminoacyl-tRNA + H2O = an N-acyl-L-amino acid + a tRNA + H(+). Functionally, hydrolyzes ribosome-free peptidyl-tRNAs (with 1 or more amino acids incorporated), which drop off the ribosome during protein synthesis, or as a result of ribosome stalling. In terms of biological role, catalyzes the release of premature peptidyl moieties from peptidyl-tRNA molecules trapped in stalled 50S ribosomal subunits, and thus maintains levels of free tRNAs and 50S ribosomes. The chain is Peptidyl-tRNA hydrolase from Anaeromyxobacter dehalogenans (strain 2CP-C).